A 291-amino-acid chain; its full sequence is Acetyl-coenzyme A carboxylase carboxyl transferase subunit beta (291 aa).

Residues 1–23 (MSWLSKLMPSGIRTDNTPSKKRS) form a disordered region. Residues 28 to 291 (LWEKCSNCGS…LGRQPAPEVA (264 aa)) enclose the CoA carboxyltransferase N-terminal domain. The Zn(2+) site is built by Cys-32, Cys-35, Cys-51, and Cys-54. The C4-type zinc-finger motif lies at 32–54 (CSNCGSALYRPELEENLEVCPKC).

It belongs to the AccD/PCCB family. In terms of assembly, acetyl-CoA carboxylase is a heterohexamer composed of biotin carboxyl carrier protein (AccB), biotin carboxylase (AccC) and two subunits each of ACCase subunit alpha (AccA) and ACCase subunit beta (AccD). Zn(2+) is required as a cofactor.

The protein localises to the cytoplasm. The enzyme catalyses N(6)-carboxybiotinyl-L-lysyl-[protein] + acetyl-CoA = N(6)-biotinyl-L-lysyl-[protein] + malonyl-CoA. Its pathway is lipid metabolism; malonyl-CoA biosynthesis; malonyl-CoA from acetyl-CoA: step 1/1. Functionally, component of the acetyl coenzyme A carboxylase (ACC) complex. Biotin carboxylase (BC) catalyzes the carboxylation of biotin on its carrier protein (BCCP) and then the CO(2) group is transferred by the transcarboxylase to acetyl-CoA to form malonyl-CoA. This is Acetyl-coenzyme A carboxylase carboxyl transferase subunit beta from Stenotrophomonas maltophilia (strain K279a).